We begin with the raw amino-acid sequence, 636 residues long: ATP-dependent zinc metalloprotease FtsH (636 aa).

At 1-12 the chain is on the cytoplasmic side; the sequence is MKKLLENLSLWM. Residues 13 to 33 form a helical membrane-spanning segment; it reads GIIILVTLLFGQVALNFGFGI. Residues 34 to 104 are Periplasmic-facing; sequence RNEKIQFSEF…VASGDSFLGL (71 aa). Residues 105-125 traverse the membrane as a helical segment; that stretch reads LFNILISWFPMLLLIGVWIFF. The Cytoplasmic segment spans residues 126–636; it reads MKQMQAGGNK…ESDLDTGDKE (511 aa). Residue 197-204 coordinates ATP; that stretch reads GPPGTGKT. Position 419 (His-419) interacts with Zn(2+). Glu-420 is an active-site residue. Zn(2+) contacts are provided by His-423 and Asp-497.

It in the central section; belongs to the AAA ATPase family. This sequence in the C-terminal section; belongs to the peptidase M41 family. In terms of assembly, homohexamer. Zn(2+) serves as cofactor.

The protein resides in the cell inner membrane. Acts as a processive, ATP-dependent zinc metallopeptidase for both cytoplasmic and membrane proteins. Plays a role in the quality control of integral membrane proteins. This Neorickettsia risticii (strain Illinois) protein is ATP-dependent zinc metalloprotease FtsH.